A 433-amino-acid chain; its full sequence is Histidine--tRNA ligase (433 aa).

This sequence belongs to the class-II aminoacyl-tRNA synthetase family. Homodimer.

The protein localises to the cytoplasm. The enzyme catalyses tRNA(His) + L-histidine + ATP = L-histidyl-tRNA(His) + AMP + diphosphate + H(+). In Blochmanniella floridana, this protein is Histidine--tRNA ligase.